Consider the following 294-residue polypeptide: Ribosomal RNA small subunit methyltransferase H (294 aa).

Residues 36 to 38 (GGH), Asp-55, Phe-82, Asp-97, and Gln-104 each bind S-adenosyl-L-methionine. The tract at residues 265-285 (KPTVATDDEQNRNPRSRSAKW) is disordered.

It belongs to the methyltransferase superfamily. RsmH family.

It localises to the cytoplasm. The enzyme catalyses cytidine(1402) in 16S rRNA + S-adenosyl-L-methionine = N(4)-methylcytidine(1402) in 16S rRNA + S-adenosyl-L-homocysteine + H(+). Its function is as follows. Specifically methylates the N4 position of cytidine in position 1402 (C1402) of 16S rRNA. In Synechococcus sp. (strain CC9902), this protein is Ribosomal RNA small subunit methyltransferase H.